A 313-amino-acid polypeptide reads, in one-letter code: Porphobilinogen deaminase (313 aa).

Position 242 is an S-(dipyrrolylmethanemethyl)cysteine (Cys242).

It belongs to the HMBS family. As to quaternary structure, monomer. It depends on dipyrromethane as a cofactor.

It carries out the reaction 4 porphobilinogen + H2O = hydroxymethylbilane + 4 NH4(+). It functions in the pathway porphyrin-containing compound metabolism; protoporphyrin-IX biosynthesis; coproporphyrinogen-III from 5-aminolevulinate: step 2/4. Tetrapolymerization of the monopyrrole PBG into the hydroxymethylbilane pre-uroporphyrinogen in several discrete steps. This is Porphobilinogen deaminase from Pseudomonas paraeruginosa (strain DSM 24068 / PA7) (Pseudomonas aeruginosa (strain PA7)).